We begin with the raw amino-acid sequence, 181 residues long: 6,7-dimethyl-8-ribityllumazine synthase (181 aa).

Residues Tyr-27, 58–60 (ALE), and 87–89 (CVI) contribute to the 5-amino-6-(D-ribitylamino)uracil site. A (2S)-2-hydroxy-3-oxobutyl phosphate-binding site is contributed by 92–93 (ET). The active-site Proton donor is His-95. Asn-120 is a binding site for 5-amino-6-(D-ribitylamino)uracil. A (2S)-2-hydroxy-3-oxobutyl phosphate-binding site is contributed by Arg-134.

Belongs to the DMRL synthase family.

It catalyses the reaction (2S)-2-hydroxy-3-oxobutyl phosphate + 5-amino-6-(D-ribitylamino)uracil = 6,7-dimethyl-8-(1-D-ribityl)lumazine + phosphate + 2 H2O + H(+). Its pathway is cofactor biosynthesis; riboflavin biosynthesis; riboflavin from 2-hydroxy-3-oxobutyl phosphate and 5-amino-6-(D-ribitylamino)uracil: step 1/2. Functionally, catalyzes the formation of 6,7-dimethyl-8-ribityllumazine by condensation of 5-amino-6-(D-ribitylamino)uracil with 3,4-dihydroxy-2-butanone 4-phosphate. This is the penultimate step in the biosynthesis of riboflavin. This Methylobacterium nodulans (strain LMG 21967 / CNCM I-2342 / ORS 2060) protein is 6,7-dimethyl-8-ribityllumazine synthase.